A 458-amino-acid chain; its full sequence is Exodeoxyribonuclease 7 large subunit (458 aa).

The protein belongs to the XseA family. Heterooligomer composed of large and small subunits.

The protein localises to the cytoplasm. It carries out the reaction Exonucleolytic cleavage in either 5'- to 3'- or 3'- to 5'-direction to yield nucleoside 5'-phosphates.. Its function is as follows. Bidirectionally degrades single-stranded DNA into large acid-insoluble oligonucleotides, which are then degraded further into small acid-soluble oligonucleotides. In Geobacter sp. (strain M21), this protein is Exodeoxyribonuclease 7 large subunit.